The following is a 198-amino-acid chain: 3-isopropylmalate dehydratase small subunit (198 aa).

Belongs to the LeuD family. LeuD type 1 subfamily. Heterodimer of LeuC and LeuD.

The catalysed reaction is (2R,3S)-3-isopropylmalate = (2S)-2-isopropylmalate. It participates in amino-acid biosynthesis; L-leucine biosynthesis; L-leucine from 3-methyl-2-oxobutanoate: step 2/4. Functionally, catalyzes the isomerization between 2-isopropylmalate and 3-isopropylmalate, via the formation of 2-isopropylmaleate. The protein is 3-isopropylmalate dehydratase small subunit of Mycobacterium marinum (strain ATCC BAA-535 / M).